Reading from the N-terminus, the 404-residue chain is Glucose-1-phosphate adenylyltransferase (404 aa).

Residues Tyr-99, Gly-164, 179 to 180 (EK), and Ser-197 contribute to the alpha-D-glucose 1-phosphate site.

It belongs to the bacterial/plant glucose-1-phosphate adenylyltransferase family.

The catalysed reaction is alpha-D-glucose 1-phosphate + ATP + H(+) = ADP-alpha-D-glucose + diphosphate. Its pathway is capsule biogenesis; capsule polysaccharide biosynthesis. The protein operates within glycan biosynthesis; glycogen biosynthesis. Its function is as follows. Involved in the biosynthesis of ADP-glucose, a building block, required in the biosynthesis of maltose-1-phosphate (M1P) and in the elongation reactions to produce linear alpha-1,4-glucans. Catalyzes the reaction between ATP and alpha-D-glucose 1-phosphate (G1P) to produce pyrophosphate and ADP-Glc. The chain is Glucose-1-phosphate adenylyltransferase from Mycobacterium marinum (strain ATCC BAA-535 / M).